The chain runs to 156 residues: Peroxisomal membrane associated protein 20 (156 aa).

The Thioredoxin domain occupies 2 to 156 (VAVGSTLPKV…SSADKVLSSL (155 aa)). Cys-43 serves as the catalytic Cysteine sulfenic acid (-SOH) intermediate.

It belongs to the peroxiredoxin family. Prx5 subfamily. In terms of assembly, homodimer; disulfide-linked, upon oxidation.

The protein localises to the cytoplasm. The protein resides in the nucleus. Functionally, may act as a chaperone rather than a peroxidase. Has no thioredoxin-dependent peroxidase activity. Shows weak chaperone activity. The chain is Peroxisomal membrane associated protein 20 from Schizosaccharomyces pombe (strain 972 / ATCC 24843) (Fission yeast).